Reading from the N-terminus, the 198-residue chain is Septum-promoting GTP-binding protein 1 (198 aa).

Residues 6–198 (KNNVTIKVGM…GDPILEYIDR (193 aa)) form a small GTPase-like region. GTP is bound by residues 17–24 (GDSSIGKT), 65–69 (DLGGQ), and 122–125 (TKYD).

As to quaternary structure, interacts with cdc7 and cdc11.

In terms of biological role, GTP-binding protein essential for the induction of septum formation at G2 and pre-START stages of mitosis. Acts via the cdc7 protein kinase pathway. This is Septum-promoting GTP-binding protein 1 (spg1) from Schizosaccharomyces pombe (strain 972 / ATCC 24843) (Fission yeast).